Reading from the N-terminus, the 173-residue chain is Nicotinamide-nucleotide adenylyltransferase (173 aa).

Belongs to the archaeal NMN adenylyltransferase family.

Its subcellular location is the cytoplasm. It catalyses the reaction beta-nicotinamide D-ribonucleotide + ATP + H(+) = diphosphate + NAD(+). It participates in cofactor biosynthesis; NAD(+) biosynthesis; NAD(+) from nicotinamide D-ribonucleotide: step 1/1. This chain is Nicotinamide-nucleotide adenylyltransferase, found in Methanosarcina barkeri (strain Fusaro / DSM 804).